A 295-amino-acid polypeptide reads, in one-letter code: MSSSRPVFRSRWLPYLLVAPQLIITVIFFIWPAGEALWYSLQSVDPFGFSSQFVGLDNFVALFHDSYYIDSFWTTIKFSTFVTVSGLLVSLFFAALVEYIVRGSRFYQTLMLLPYAVAPAVAAVLWIFLFNPGRGLITHFLAEFGYDWNHAQNSGQAMFLVVFASVWKQISYNFLFFYAALQSIPRSLIEAAAIDGVGPIRRFFKIALPLIAPVSFFLLVVNLVYAFFDTFPVIDAATSGGPVQAITTLIYKIYREGFTGLDLASSAAQSVVLMFLVIVLTVVQFRYVESKVRYQ.

Over 1–11 (MSSSRPVFRSR) the chain is Cytoplasmic. The chain crosses the membrane as a helical span at residues 12-32 (WLPYLLVAPQLIITVIFFIWP). The Periplasmic portion of the chain corresponds to 33–80 (AGEALWYSLQSVDPFGFSSQFVGLDNFVALFHDSYYIDSFWTTIKFST). The 209-residue stretch at 76 to 284 (IKFSTFVTVS…FLVIVLTVVQ (209 aa)) folds into the ABC transmembrane type-1 domain. Residues 81 to 101 (FVTVSGLLVSLFFAALVEYIV) form a helical membrane-spanning segment. The Cytoplasmic segment spans residues 102–109 (RGSRFYQT). A helical transmembrane segment spans residues 110 to 130 (LMLLPYAVAPAVAAVLWIFLF). The Periplasmic segment spans residues 131–156 (NPGRGLITHFLAEFGYDWNHAQNSGQ). A helical transmembrane segment spans residues 157 to 177 (AMFLVVFASVWKQISYNFLFF). Over 178 to 207 (YAALQSIPRSLIEAAAIDGVGPIRRFFKIA) the chain is Cytoplasmic. The chain crosses the membrane as a helical span at residues 208-228 (LPLIAPVSFFLLVVNLVYAFF). At 229–262 (DTFPVIDAATSGGPVQAITTLIYKIYREGFTGLD) the chain is on the periplasmic side. Residues 263–283 (LASSAAQSVVLMFLVIVLTVV) form a helical membrane-spanning segment. Over 284-295 (QFRYVESKVRYQ) the chain is Cytoplasmic.

This sequence belongs to the binding-protein-dependent transport system permease family. UgpAE subfamily. As to quaternary structure, the complex is composed of two ATP-binding proteins (UgpC), two transmembrane proteins (UgpA and UgpE) and a solute-binding protein (UgpB).

The protein resides in the cell inner membrane. In terms of biological role, part of the ABC transporter complex UgpBAEC involved in sn-glycerol-3-phosphate (G3P) import. Probably responsible for the translocation of the substrate across the membrane. This is sn-glycerol-3-phosphate transport system permease protein UgpA (ugpA) from Shigella dysenteriae serotype 1 (strain Sd197).